A 777-amino-acid chain; its full sequence is Translation initiation factor IF-2 (777 aa).

Disordered stretches follow at residues 30–54 (SPSMGATIVKKRRRKTHDTEEQDEN) and 98–117 (EDSNEKTNDRDSATNTSFKE). Basic and acidic residues predominate over residues 98-109 (EDSNEKTNDRDS). The 171-residue stretch at 279–449 (PKPPIVTFMG…LLIAELMKLE (171 aa)) folds into the tr-type G domain. Residues 288–295 (GHVDHGKT) form a G1 region. 288–295 (GHVDHGKT) contacts GTP. The G2 stretch occupies residues 313–317 (GITQH). Residues 334-337 (DTPG) are G3. GTP-binding positions include 334–338 (DTPGH) and 388–391 (NKID). Residues 388-391 (NKID) are G4. The segment at 425-427 (SAK) is G5.

This sequence belongs to the TRAFAC class translation factor GTPase superfamily. Classic translation factor GTPase family. IF-2 subfamily.

The protein localises to the cytoplasm. Functionally, one of the essential components for the initiation of protein synthesis. Protects formylmethionyl-tRNA from spontaneous hydrolysis and promotes its binding to the 30S ribosomal subunits. Also involved in the hydrolysis of GTP during the formation of the 70S ribosomal complex. This is Translation initiation factor IF-2 from Wolbachia sp. subsp. Brugia malayi (strain TRS).